A 162-amino-acid polypeptide reads, in one-letter code: MKFLVLALCIAAASAAVLTTEQADLVKKTWSTVKFNEVDILYAVFKAYPDIMAKFPQFAGKDLDSIKDSAAFATHATRIVSFLSEVISLAGSDANIPAIQNLAKELATSHKPRGVSKDQFTEFRTALFTYLKAHINFDGPTETAWTLALDTTYAMLFSAMDS.

An N-terminal signal peptide occupies residues 1 to 15 (MKFLVLALCIAAASA). Positions 17-161 (VLTTEQADLV…TYAMLFSAMD (145 aa)) constitute a Globin domain. Heme b-binding residues include histidine 75 and histidine 110.

This sequence belongs to the globin family. As to quaternary structure, homodimer.

In Chironomus thummi thummi (Midge), this protein is Globin CTT-VI (CTT-6).